Consider the following 1586-residue polypeptide: Zinc finger protein GLI2 (1586 aa).

The segment covering 1–10 (METSASATAS) has biased composition (polar residues). Residues 1-22 (METSASATASEKQEAKSGILEA) are disordered. V50 is covalently cross-linked (Glycyl lysine isopeptide (Lys-Gly) (interchain with G-Cter in SUMO2)). A phosphoserine mark is found at S149, S234, S236, and S242. The segment covering 342-367 (SSSSNCLSDTNQNKQSSESAVSSTVN) has biased composition (polar residues). The interval 342 to 389 (SSSSNCLSDTNQNKQSSESAVSSTVNPVAIHKRSKVKTEPEGLRPASP) is disordered. S388 carries the phosphoserine; by DYRK2 modification. The C2H2-type 1 zinc finger occupies 437–464 (TNCHWEDCTKEYDTQEQLVHHINNEHIH). Residues 475–497 (QACTREQKPFKAQYMLVVHMRRH) form a C2H2-type 2; degenerate zinc finger. 3 C2H2-type zinc fingers span residues 503–527 (HKCTFEGCSKAYSRLENLKTHLRSH), 533–558 (YVCEHEGCNKAFSNASDRAKHQNRTH), and 564–589 (YICKIPGCTKRYTDPSSLRKHVKTVH). 2 disordered regions span residues 577-636 (DPSS…TSQA) and 650-716 (SSGL…SAGG). Residues 589–605 (HGPDAHVTKKQRNDVHL) are compositionally biased toward basic and acidic residues. Low complexity predominate over residues 654–674 (CQSSPGAQSSCSSEPSPLGSA). At T725 the chain carries Phosphothreonine. Disordered stretches follow at residues 742-879 (DSCS…SGLL), 925-1030 (RTLP…RPPS), 1182-1215 (QYPGYSPQGLQASPGGLDSTQPHLQPRSGAPSQG), 1421-1441 (MGNMGSVPPQPPPQDAGGAPD), and 1469-1498 (MRSQPPQPQACQDSIQPQPLPSPGVNQVSS). N6-acetyllysine; by EP300 is present on K757. The span at 791 to 802 (LSASEVTMLSQL) shows a compositional bias: polar residues. Composition is skewed to low complexity over residues 809-824 (STSTVSSAYTVSRRSS) and 947-961 (GHGHAGAAPAFPHEA). The segment covering 968–977 (RASDPVRRPD) has biased composition (basic and acidic residues). S1011 is subject to Phosphoserine; by DYRK2. Residues 1469–1485 (MRSQPPQPQACQDSIQP) show a composition bias toward polar residues.

This sequence belongs to the GLI C2H2-type zinc-finger protein family. In terms of assembly, interaction with ZIC1 and ZIC2. Interacts with STK36. Interacts with SUFU; this inhibits transcriptional activation mediated by GLI2. Interacts (via C-terminal internal region) with FOXC1 (via N-terminus); this interaction is direct and increases GLI2 DNA-binding and transcriptional activity through a smoothened (SMO)-independent Hedgehog (Hh) signaling pathway. In terms of processing, phosphorylated in vitro by ULK3. Phosphorylated by DYRK2; this inhibits GLI2 transcription factor activity and promotes proteasomal degradation of GLI2. Post-translationally, acetylation at Lys-757 inhibits Hh target gene expression, probably by impeding entry into chromatin thus preventing promoter occupancy. In terms of tissue distribution, expressed in breast cancers (at protein level). Isoform 1 and isoform 4 are expressed in HTLV-1-infected T-cell lines (at protein level). Isoform 1 and isoform 2 are strongly expressed in HTLV-1-infected T-cell lines. Isoform 3 and isoform 4 are weakly expressed in HTLV-1-infected T-cell lines.

The protein resides in the nucleus. It localises to the cytoplasm. The protein localises to the cell projection. It is found in the cilium. Its function is as follows. Functions as a transcription regulator in the hedgehog (Hh) pathway. Functions as a transcriptional activator. May also function as transcriptional repressor. Requires STK36 for full transcriptional activator activity. Required for normal embryonic development. Involved in the smoothened (SHH) signaling pathway. In terms of biological role, acts as a transcriptional activator in T-cell leukemia virus type 1 (HTLV-1)-infected cells in a Tax-dependent manner. Binds to the DNA sequence 5'-GAACCACCCA-3' which is part of the Tax-responsive element (TRE-2S) regulatory element that augments the Tax-dependent enhancer of HTLV-1. Functionally, (Microbial infection) Acts as a transcriptional activators in T-cell leukemia virus type 1 (HTLV-1)-infected cells in a Tax-dependent manner. Binds to the DNA sequence 5'-GAACCACCCA-3' which is part of the Tax-responsive element (TRE-2S) regulatory element that augments the Tax-dependent enhancer of HTLV-1. Its function is as follows. Acts as a transcriptional repressor. The sequence is that of Zinc finger protein GLI2 from Homo sapiens (Human).